The chain runs to 91 residues: Acylphosphatase (91 aa).

The Acylphosphatase-like domain occupies 5–91; sequence WKKWNVRGVV…QEYKDFHVEF (87 aa). Active-site residues include arginine 20 and asparagine 38.

It belongs to the acylphosphatase family.

The enzyme catalyses an acyl phosphate + H2O = a carboxylate + phosphate + H(+). In Fervidobacterium nodosum (strain ATCC 35602 / DSM 5306 / Rt17-B1), this protein is Acylphosphatase (acyP).